The chain runs to 470 residues: Methylenetetrahydrofolate--tRNA-(uracil-5-)-methyltransferase TrmFO (470 aa).

10 to 15 (GAGLAG) lines the FAD pocket.

It belongs to the MnmG family. TrmFO subfamily. FAD serves as cofactor.

Its subcellular location is the cytoplasm. The catalysed reaction is uridine(54) in tRNA + (6R)-5,10-methylene-5,6,7,8-tetrahydrofolate + NADH + H(+) = 5-methyluridine(54) in tRNA + (6S)-5,6,7,8-tetrahydrofolate + NAD(+). It catalyses the reaction uridine(54) in tRNA + (6R)-5,10-methylene-5,6,7,8-tetrahydrofolate + NADPH + H(+) = 5-methyluridine(54) in tRNA + (6S)-5,6,7,8-tetrahydrofolate + NADP(+). Its function is as follows. Catalyzes the folate-dependent formation of 5-methyl-uridine at position 54 (M-5-U54) in all tRNAs. The chain is Methylenetetrahydrofolate--tRNA-(uracil-5-)-methyltransferase TrmFO from Prochlorococcus marinus subsp. pastoris (strain CCMP1986 / NIES-2087 / MED4).